The following is a 318-amino-acid chain: MHVLFIIDPLPLLKAYKDSSVAMMQALQARGHTLSVALQGDLYIDAGEVRTRFAPIALRDGADLHGHDWWRETGAADEAPLARFDAVVMRKDPPFDMEYVYSTHLLEYAQQQGARVFNSGAAIRNHPEKLAITEFPDLTTPTLVTRDMGRIRAFHAAQGDVIVKPLDGMGGTGIFRLQRSEPNLNAILETLTDNGTRTIMAQRYIPEIVKGDKRILLIGGEPVPYSLARIPLAGETRGNLAAGGRGVAQPLSERDLHLARTVADRLAGRGLLLVGLDVIGDYITEVNVTSPTCFVEITEQTGFNVPEMFAVALESAAG.

The 186-residue stretch at 129-314 (KLAITEFPDL…VPEMFAVALE (186 aa)) folds into the ATP-grasp domain. ATP is bound at residue 155–211 (HAAQGDVIVKPLDGMGGTGIFRLQRSEPNLNAILETLTDNGTRTIMAQRYIPEIVKG). 2 residues coordinate Mg(2+): E285 and N287.

It belongs to the prokaryotic GSH synthase family. Requires Mg(2+) as cofactor. It depends on Mn(2+) as a cofactor.

The enzyme catalyses gamma-L-glutamyl-L-cysteine + glycine + ATP = glutathione + ADP + phosphate + H(+). The protein operates within sulfur metabolism; glutathione biosynthesis; glutathione from L-cysteine and L-glutamate: step 2/2. This Bordetella bronchiseptica (strain ATCC BAA-588 / NCTC 13252 / RB50) (Alcaligenes bronchisepticus) protein is Glutathione synthetase.